The following is an 856-amino-acid chain: 3-hydroxy-3-methylglutaryl-coenzyme A reductase (856 aa).

The next 4 helical transmembrane spans lie at 12-32, 89-109, 123-143, and 190-210; these read FCAS…VCML, ILGI…SSVI, LFFF…QFAL, and VLCC…MTFY. An N-linked (GlcNAc...) asparagine glycan is attached at Asn326. A helical transmembrane segment spans residues 344-364; sequence SADHIVILILLLALAVKFVFF. A linker region spans residues 365-443; it reads ETRDELTTTR…CEVMALVTSG (79 aa). Asn412 is a glycosylation site (N-linked (GlcNAc...) asparagine). Residues 443 to 771 form a catalytic region; it reads GHIAGYQLEK…SCTMPSIEIG (329 aa). Active-site charge relay system residues include Glu528 and Lys659. An N-linked (GlcNAc...) asparagine glycan is attached at Asn700. The active-site Charge relay system is Asp735. His834 acts as the Proton donor in catalysis. Residues 836 to 856 are disordered; the sequence is RHNRSSVSTSGSEPSTPACKS. The N-linked (GlcNAc...) asparagine glycan is linked to Asn838. A compositionally biased stretch (low complexity) spans 840–856; it reads SSVSTSGSEPSTPACKS.

The protein belongs to the HMG-CoA reductase family.

It localises to the endoplasmic reticulum membrane. The catalysed reaction is (R)-mevalonate + 2 NADP(+) + CoA = (3S)-3-hydroxy-3-methylglutaryl-CoA + 2 NADPH + 2 H(+). It functions in the pathway metabolic intermediate biosynthesis; (R)-mevalonate biosynthesis; (R)-mevalonate from acetyl-CoA: step 3/3. Its activity is regulated as follows. The activity of HMG-CoA-reductase is suppressed by exogenous mevalonate. Functionally, synthesis of mevalonate for the production of non-sterol isoprenoids, which are essential for growth differentiation. This chain is 3-hydroxy-3-methylglutaryl-coenzyme A reductase, found in Blattella germanica (German cockroach).